The following is a 277-amino-acid chain: Co-chaperone protein DjlA (277 aa).

The Periplasmic segment spans residues 1–6 (MRYWGK). A helical membrane pass occupies residues 7 to 31 (LLGLVLGVMYAPGVVGALLGLLVGH). Residues 32–277 (MVDRALGAKR…DLIKREKGFK (246 aa)) lie on the Cytoplasmic side of the membrane. The J domain occupies 211–277 (DACKVLGVNS…DLIKREKGFK (67 aa)).

Homodimer.

Its subcellular location is the cell inner membrane. Functionally, regulatory DnaK co-chaperone. Direct interaction between DnaK and DjlA is needed for the induction of the wcaABCDE operon, involved in the synthesis of a colanic acid polysaccharide capsule, possibly through activation of the RcsB/RcsC phosphotransfer signaling pathway. The colanic acid capsule may help the bacterium survive conditions outside the host. This Yersinia pestis protein is Co-chaperone protein DjlA.